The sequence spans 238 residues: Orotidine 5'-phosphate decarboxylase (238 aa).

Substrate is bound by residues D18, K40, 67-76 (DMKLLDIDNT), T122, R183, Q192, and R213. K69 (proton donor) is an active-site residue.

Belongs to the OMP decarboxylase family. Type 1 subfamily. Homodimer.

The enzyme catalyses orotidine 5'-phosphate + H(+) = UMP + CO2. It participates in pyrimidine metabolism; UMP biosynthesis via de novo pathway; UMP from orotate: step 2/2. Functionally, catalyzes the decarboxylation of orotidine 5'-monophosphate (OMP) to uridine 5'-monophosphate (UMP). This chain is Orotidine 5'-phosphate decarboxylase, found in Brucella abortus (strain S19).